The primary structure comprises 342 residues: MVSVTRAVFGDLPLGAGTVEKFQLQSDQLRVDIISWGCTITALEVKDRQGRASDVVLGFDELEGYLQKQPYFGAVVGRVANRIAKGTFTLDGKEYKLAINNGPNSLHGGVKGFDKVLWTPRVLSNGVEFSRVSPDGEEGYPGELKVWVMYTLDGGELVVNYRAQASQTTPVNLTNHSYFNLAGQGSPNIYDHEVTIEADAFLPVDEVLIPTGEIASVQGTAFDLRKPVELGKHLQEFHVNGFDHNFCLKGSKEKRFCARVHHAGSGRVLEVYTTQPGVQFYTGNFLDGTLKGKSGAGYPKHSGFCLETQSWPDAVNQPHFPPVLLKPGEEYDHTTWFKFSVA.

Residues 81–82 (NR) and histidine 107 each bind beta-D-galactose. Residue serine 124 is modified to Phosphoserine. The Proton donor role is filled by histidine 176. Residues 176–178 (HSY), aspartate 243, glutamine 279, and glutamate 307 each bind beta-D-galactose. The active-site Proton acceptor is the glutamate 307.

Belongs to the aldose epimerase family. Monomer.

Its subcellular location is the cytoplasm. The enzyme catalyses alpha-D-galactose = beta-D-galactose. It carries out the reaction alpha-D-glucose = beta-D-glucose. The protein operates within carbohydrate metabolism; hexose metabolism. Its pathway is carbohydrate metabolism; galactose metabolism. Functionally, mutarotase that catalyzes the interconversion of beta-D-galactose and alpha-D-galactose during galactose metabolism. Beta-D-galactose is metabolized in the liver into glucose 1-phosphate, the primary metabolic fuel, by the action of four enzymes that constitute the Leloir pathway: GALM, GALK1 (galactokinase), GALT (galactose-1-phosphate uridylyltransferase) and GALE (UDP-galactose-4'-epimerase). Involved in the maintenance of the equilibrium between the beta- and alpha-anomers of galactose, therefore ensuring a sufficient supply of the alpha-anomer for GALK1. Also active on D-glucose although shows a preference for galactose over glucose. The chain is Galactose mutarotase (GALM) from Bos taurus (Bovine).